Consider the following 194-residue polypeptide: Peptidyl-tRNA hydrolase (194 aa).

Y17 lines the tRNA pocket. H22 functions as the Proton acceptor in the catalytic mechanism. Positions 68, 70, and 116 each coordinate tRNA.

This sequence belongs to the PTH family. Monomer.

Its subcellular location is the cytoplasm. The enzyme catalyses an N-acyl-L-alpha-aminoacyl-tRNA + H2O = an N-acyl-L-amino acid + a tRNA + H(+). Its function is as follows. Hydrolyzes ribosome-free peptidyl-tRNAs (with 1 or more amino acids incorporated), which drop off the ribosome during protein synthesis, or as a result of ribosome stalling. Functionally, catalyzes the release of premature peptidyl moieties from peptidyl-tRNA molecules trapped in stalled 50S ribosomal subunits, and thus maintains levels of free tRNAs and 50S ribosomes. This chain is Peptidyl-tRNA hydrolase, found in Histophilus somni (strain 2336) (Haemophilus somnus).